We begin with the raw amino-acid sequence, 352 residues long: (2E,6E)-farnesyl diphosphate synthase (352 aa).

The isopentenyl diphosphate site is built by K43, R46, and H77. Mg(2+) is bound by residues D84 and D88. A DDXXD motif motif is present at residues 84 to 88 (DDLID). R94 lines the isopentenyl diphosphate pocket. The short motif at 236–240 (DDVLG) is the DDXXD motif element.

The protein belongs to the FPP/GGPP synthase family. It depends on Mg(2+) as a cofactor.

The catalysed reaction is isopentenyl diphosphate + dimethylallyl diphosphate = (2E)-geranyl diphosphate + diphosphate. The enzyme catalyses isopentenyl diphosphate + (2E)-geranyl diphosphate = (2E,6E)-farnesyl diphosphate + diphosphate. It participates in isoprenoid biosynthesis; geranyl diphosphate biosynthesis; geranyl diphosphate from dimethylallyl diphosphate and isopentenyl diphosphate: step 1/1. Its pathway is isoprenoid biosynthesis; farnesyl diphosphate biosynthesis; farnesyl diphosphate from geranyl diphosphate and isopentenyl diphosphate. Its function is as follows. Catalyzes the sequential condensations of isopentenyl pyrophosphate (IPP) with dimethylallyl diphosphate (DMAPP) to yield geranyl diphosphate (GPP) and with GPP to yield (2E,6E)-farnesyl diphosphate (E,E-FPP). The sequence is that of (2E,6E)-farnesyl diphosphate synthase from Mycobacterium tuberculosis (strain ATCC 25618 / H37Rv).